Consider the following 646-residue polypeptide: Threonine--tRNA ligase (646 aa).

One can recognise a TGS domain in the interval 1-63; sequence MADLSIIFPD…SSGGSIEIIT (63 aa). The tract at residues 244–541 is catalytic; it reads DHRKLGKELG…LIEEYKGAFP (298 aa). Residues C337, H388, and H518 each contribute to the Zn(2+) site.

It belongs to the class-II aminoacyl-tRNA synthetase family. In terms of assembly, homodimer. The cofactor is Zn(2+).

It localises to the cytoplasm. The catalysed reaction is tRNA(Thr) + L-threonine + ATP = L-threonyl-tRNA(Thr) + AMP + diphosphate + H(+). In terms of biological role, catalyzes the attachment of threonine to tRNA(Thr) in a two-step reaction: L-threonine is first activated by ATP to form Thr-AMP and then transferred to the acceptor end of tRNA(Thr). Also edits incorrectly charged L-seryl-tRNA(Thr). This chain is Threonine--tRNA ligase, found in Oceanobacillus iheyensis (strain DSM 14371 / CIP 107618 / JCM 11309 / KCTC 3954 / HTE831).